We begin with the raw amino-acid sequence, 833 residues long: Leucine--tRNA ligase (833 aa).

A 'HIGH' region motif is present at residues Pro41–His52. The 'KMSKS' region signature appears at Lys610–Ser614. ATP is bound at residue Lys613.

The protein belongs to the class-I aminoacyl-tRNA synthetase family.

The protein localises to the cytoplasm. The catalysed reaction is tRNA(Leu) + L-leucine + ATP = L-leucyl-tRNA(Leu) + AMP + diphosphate. In Streptococcus pneumoniae (strain Taiwan19F-14), this protein is Leucine--tRNA ligase.